Consider the following 533-residue polypeptide: Retinoic acid receptor RXR-beta (533 aa).

The segment at M1–V24 is disordered. Residues M1 to L204 are modulating. R25 bears the Omega-N-methylarginine mark. Residues R37 to V183 are disordered. Residues A46 to P61 show a composition bias toward low complexity. Residues E67 to S82 are compositionally biased toward basic and acidic residues. Low complexity predominate over residues P83–G94. Pro residues-rich tracts occupy residues A95–S109 and A118–L129. Low complexity predominate over residues G130–P143. The span at G144–F153 shows a compositional bias: pro residues. 2 NR C4-type zinc fingers span residues C205–C225 and C241–C265. The nuclear receptor DNA-binding region spans C205 to M270. The hinge stretch occupies residues K271 to A295. Over residues Q276 to D288 the composition is skewed to basic and acidic residues. Disordered stretches follow at residues Q276–M299 and Q313–V336. Positions P296–P529 constitute an NR LBD domain. Residues E320–G329 show a composition bias toward gly residues.

This sequence belongs to the nuclear hormone receptor family. NR2 subfamily. In terms of assembly, homodimer (in vitro). Heterodimer with other retinoic acid receptor family members. Binds DNA preferentially as a RAR/RXR heterodimer. Interacts with NR1H3. Interacts with AKAP13.

The protein localises to the nucleus. Its subcellular location is the cytoplasm. Its function is as follows. Receptor for retinoic acid. Retinoic acid receptors bind as heterodimers to their target response elements in response to their ligands, all-trans or 9-cis retinoic acid, and regulate gene expression in various biological processes. The RAR/RXR heterodimers bind to the retinoic acid response elements (RARE). This Canis lupus familiaris (Dog) protein is Retinoic acid receptor RXR-beta (RXRB).